Here is a 275-residue protein sequence, read N- to C-terminus: Formamidopyrimidine-DNA glycosylase (275 aa).

Proline 2 serves as the catalytic Schiff-base intermediate with DNA. Catalysis depends on glutamate 3, which acts as the Proton donor. The active-site Proton donor; for beta-elimination activity is lysine 59. DNA-binding residues include histidine 93, arginine 112, and arginine 153. Residues 238-272 (NVYDRVGKPCPRCQTAIERIVVAQRSTFFCPLCQV) form an FPG-type zinc finger. Arginine 262 acts as the Proton donor; for delta-elimination activity in catalysis.

It belongs to the FPG family. As to quaternary structure, monomer. The cofactor is Zn(2+).

It carries out the reaction Hydrolysis of DNA containing ring-opened 7-methylguanine residues, releasing 2,6-diamino-4-hydroxy-5-(N-methyl)formamidopyrimidine.. The enzyme catalyses 2'-deoxyribonucleotide-(2'-deoxyribose 5'-phosphate)-2'-deoxyribonucleotide-DNA = a 3'-end 2'-deoxyribonucleotide-(2,3-dehydro-2,3-deoxyribose 5'-phosphate)-DNA + a 5'-end 5'-phospho-2'-deoxyribonucleoside-DNA + H(+). Involved in base excision repair of DNA damaged by oxidation or by mutagenic agents. Acts as a DNA glycosylase that recognizes and removes damaged bases. Has a preference for oxidized purines, such as 7,8-dihydro-8-oxoguanine (8-oxoG). Has AP (apurinic/apyrimidinic) lyase activity and introduces nicks in the DNA strand. Cleaves the DNA backbone by beta-delta elimination to generate a single-strand break at the site of the removed base with both 3'- and 5'-phosphates. This chain is Formamidopyrimidine-DNA glycosylase, found in Chloroflexus aggregans (strain MD-66 / DSM 9485).